The sequence spans 570 residues: Proline--tRNA ligase (570 aa).

Belongs to the class-II aminoacyl-tRNA synthetase family. ProS type 1 subfamily. As to quaternary structure, homodimer.

The protein resides in the cytoplasm. The catalysed reaction is tRNA(Pro) + L-proline + ATP = L-prolyl-tRNA(Pro) + AMP + diphosphate. Catalyzes the attachment of proline to tRNA(Pro) in a two-step reaction: proline is first activated by ATP to form Pro-AMP and then transferred to the acceptor end of tRNA(Pro). As ProRS can inadvertently accommodate and process non-cognate amino acids such as alanine and cysteine, to avoid such errors it has two additional distinct editing activities against alanine. One activity is designated as 'pretransfer' editing and involves the tRNA(Pro)-independent hydrolysis of activated Ala-AMP. The other activity is designated 'posttransfer' editing and involves deacylation of mischarged Ala-tRNA(Pro). The misacylated Cys-tRNA(Pro) is not edited by ProRS. The sequence is that of Proline--tRNA ligase from Pelotomaculum thermopropionicum (strain DSM 13744 / JCM 10971 / SI).